The following is a 428-amino-acid chain: Glutamate-1-semialdehyde 2,1-aminomutase (428 aa).

Lysine 265 carries the post-translational modification N6-(pyridoxal phosphate)lysine.

It belongs to the class-III pyridoxal-phosphate-dependent aminotransferase family. HemL subfamily. In terms of assembly, homodimer. Requires pyridoxal 5'-phosphate as cofactor.

Its subcellular location is the cytoplasm. The catalysed reaction is (S)-4-amino-5-oxopentanoate = 5-aminolevulinate. The protein operates within porphyrin-containing compound metabolism; protoporphyrin-IX biosynthesis; 5-aminolevulinate from L-glutamyl-tRNA(Glu): step 2/2. The sequence is that of Glutamate-1-semialdehyde 2,1-aminomutase from Thioalkalivibrio sulfidiphilus (strain HL-EbGR7).